Reading from the N-terminus, the 174-residue chain is Transcriptional repressor NrdR (174 aa).

A zinc finger spans residues 3–34 (CPFCQHNDTRVIDSRVSEDGTTIRRRRECEAC). In terms of domain architecture, ATP-cone spans 49–139 (PTVVKSDGGR…VYRSFQDVAD (91 aa)).

It belongs to the NrdR family. The cofactor is Zn(2+).

Functionally, negatively regulates transcription of bacterial ribonucleotide reductase nrd genes and operons by binding to NrdR-boxes. This Xanthomonas campestris pv. campestris (strain 8004) protein is Transcriptional repressor NrdR.